We begin with the raw amino-acid sequence, 41 residues long: U-megalopygitoxin(11)-Mo28 (41 aa).

The first 29 residues, 1 to 29 (MRTTLLLLIIAITVMVFVSEAYAAPAPEP), serve as a signal peptide directing secretion.

It belongs to the caterpillar 11 family. As to expression, expressed by the venom apparatus.

Its subcellular location is the secreted. Its function is as follows. Probable toxin. This is U-megalopygitoxin(11)-Mo28 from Megalopyge opercularis (Southern flannel moth).